The sequence spans 770 residues: ARF GTPase-activating protein GIT1 (770 aa).

One can recognise an Arf-GAP domain in the interval 1 to 124 (MSRKGPRAEV…AFVHKLPCRD (124 aa)). Positions 1–124 (MSRKGPRAEV…AFVHKLPCRD (124 aa)) are interaction with gamma-tubulin and localization to the centrosome. The segment at 11–34 (CADCSAPDPGWASISRGVLVCDEC) adopts a C4-type zinc-finger fold. ANK repeat units follow at residues 132-161 (DLSK…QANF), 166-195 (KGTT…DPGS), and 199-228 (NGRT…ELTD). The residue at position 224 (Tyr224) is a Phosphotyrosine. An interaction with PCLO region spans residues 245 to 374 (HYIIPQMADR…QGKSLSSPTD (130 aa)). The interaction with PTK2/FAK1 stretch occupies residues 253–424 (DRSRQKCMSQ…NRARSMDSSD (172 aa)). The interaction with ARHGEF7 stretch occupies residues 254–376 (RSRQKCMSQS…KSLSSPTDNL (123 aa)). The segment at 363-425 (RQQGKSLSSP…RARSMDSSDL (63 aa)) is disordered. The segment covering 366 to 383 (GKSLSSPTDNLELSARNQ) has biased composition (polar residues). Phosphoserine is present on residues Ser368 and Ser371. A Phosphothreonine modification is found at Thr373. The tract at residues 375-596 (NLELSARNQS…QEGSRHASKL (222 aa)) is interaction with NCK2 and GRIN3A. The interval 375–596 (NLELSARNQS…QEGSRHASKL (222 aa)) is required for localization at synapses. Residues Ser379 and Ser384 each carry the phosphoserine modification. Tyr392 bears the Phosphotyrosine mark. Residues Ser394 and Ser397 each carry the phosphoserine modification. Residues 394–403 (SVASDEDTDQ) show a composition bias toward acidic residues. Thr401 carries the post-translational modification Phosphothreonine. Phosphoserine is present on residues Ser419, Ser422, and Ser426. The segment at 420-475 (MDSSDLSDGAVTLQEYLELKKALATSEAKVQQLMKVNSSLSDELRKLQREIHKLQA) is interaction with MAPK1. Residues 429–629 (AVTLQEYLEL…EGKRFLELSK (201 aa)) form an interaction with IKBKG region. The stretch at 449-483 (VQQLMKVNSSLSDELRKLQREIHKLQAENLQLRQP) forms a coiled coil. Phosphoserine is present on residues Ser507 and Ser545. A Phosphothreonine modification is found at Thr546. Residues Tyr554 and Tyr563 each carry the phosphotyrosine modification. Phosphoserine occurs at positions 570, 580, 601, and 605. Over residues 574–586 (VTFTPSSPLLSSS) the composition is skewed to low complexity. Residues 574–615 (VTFTPSSPLLSSSQEGSRHASKLSRHGSGAESDYENTQSGEP) are disordered. A Phosphothreonine modification is found at Thr610. Phosphoserine is present on Ser639. The interval 646–770 (PGLPSTEDVI…VTITTREKKQ (125 aa)) is interaction with PXN and TGFB1I1.

In terms of assembly, forms homodimers and possibly oligomers. May form heterooligomers with GIT2. Interacts with G protein-coupled receptor kinases, including GRK2, GRK3, GRK5 and GRK6. Interacts with PPFIA1, PPFIA2 and PPFIA4. Interacts with GRIP1 and forms a ternary complex with PPFIA1 and GRIP1. Directly interacts with ARHGEF7/beta-PIX, forming in vitro a heptameric complex made of a GIT1 dimer and an ARHGEF7 trimer. Directly interacts with PXN/paxillin; this interaction is enhanced in the presence of ARHGEF7. Directly interacts (via C-terminus) with TGFB1I1/Hic-5 (via LD motif 3). Directly interacts with PTK2/FAK1. May interact with PTK2B/PYK2; this interaction may be indirect. Interacts with AMPA receptors GRIA2/3. Directly interacts with protein Piccolo/PCLO. Forms a complex with Ephrin-B1/EFNB1 and NCK2/GRB4 (via SH2); this interaction is important for spine morphogenesis and synapse formation. Interaction with NCK2 is transient and depends upon GIT1 phosphorylation at Tyr-392. Interacts with GRIN3A/GluN3A (via C-terminus); this interaction competes with GIT1 interaction with ARHGEF7 and limits synaptic localization of GIT1. Interacts with IKBKG/NEMO in resting bone mesenchymal stem cells, as well as in TNF-stimulated cells; this interaction may increase IKBKG affinity for 'Lys-63'-linked polyubiquitin chains. Interacts with GABA(A) receptors, including GABRB3 and GABRG2. Interacts with SCRIB. Interacts (via N- and C-terminus) with ENTR1/SDCCAG3 (via N-terminus); this interaction is direct. May form a tripartite complex with ENTR1 and PTPN13. Interacts with YWHAZ. Interacts with PAK1 and PAK3. Directly interacts (via N-terminus) with gamma-tubulin. Interacts with MAPK1 and MAPK3; this interaction is required for MAPK1/3 recruitment to focal adhesions. Post-translationally, phosphorylated on tyrosine residues by PTK2/FAK1 and SRC in growing fibroblasts. Phosphorylation at Tyr-392 is induced by activation of Ephrin-B1/EFNB1 and catalyzed by SRC family kinases. It is required for the interaction with NCK2 and for GIT1 recruitment to synapses in hippocampal neurons. As to expression, widely expressed. Expressed at high levels in testis (at protein level). Expressed in the brain, including in CA1 hippocampal neurons, in the amygdala, and thalamic nuclei (at protein level).

It is found in the cytoplasm. The protein localises to the synapse. It localises to the presynapse. Its subcellular location is the postsynapse. The protein resides in the postsynaptic density. It is found in the cell junction. The protein localises to the focal adhesion. It localises to the cell projection. Its subcellular location is the lamellipodium. The protein resides in the cytoskeleton. It is found in the microtubule organizing center. The protein localises to the centrosome. It localises to the spindle pole. In terms of biological role, GTPase-activating protein for ADP ribosylation factor family members, including ARF1. Multidomain scaffold protein that interacts with numerous proteins and therefore participates in many cellular functions, including receptor internalization, focal adhesion remodeling, and signaling by both G protein-coupled receptors and tyrosine kinase receptors. Through PAK1 activation, positively regulates microtubule nucleation during interphase. Plays a role in the regulation of cytokinesis; for this function, may act in a pathway also involving ENTR1 and PTPN13. May promote cell motility both by regulating focal complex dynamics and by the activation of RAC1. May act as scaffold for MAPK1/3 signal transduction, recruiting MAPK1/3 to focal adhesions after EGF stimulation via a Src-dependent pathway, hence stimulating cell migration. Plays a role in brain development and function. Involved in the regulation of spine density and synaptic plasticity that is required for processes involved in learning. Plays an important role in dendritic spine morphogenesis and synapse formation. In hippocampal neurons, recruits guanine nucleotide exchange factors (GEFs), such as ARHGEF7/beta-PIX, to the synaptic membrane. These in turn locally activate RAC1, which is an essential step for spine morphogenesis and synapse formation. May contribute to the organization of presynaptic active zones through oligomerization and formation of a Piccolo/PCLO-based protein network, which includes ARHGEF7/beta-PIX and FAK1. In neurons, through its interaction with liprin-alpha family members, may be required for AMPA receptor (GRIA2/3) proper targeting to the cell membrane. In complex with GABA(A) receptors and ARHGEF7, plays a crucial role in regulating GABA(A) receptor synaptic stability, maintaining GPHN/gephyrin scaffolds and hence GABAergic inhibitory synaptic transmission, by locally coordinating RAC1 and PAK1 downstream effector activity, leading to F-actin stabilization. May also be important for RAC1 downstream signaling pathway through PAK3 and regulation of neuronal inhibitory transmission at presynaptic input. Required for successful bone regeneration during fracture healing. The function in intramembranous ossification may, at least partly, exerted by macrophages in which GIT1 is a key negative regulator of redox homeostasis, IL1B production, and glycolysis, acting through the ERK1/2/NRF2/NFE2L2 axis. May also play a role in angiogenesis during fracture healing. In this process, may regulate activation of the canonical NF-kappa-B signal in bone mesenchymal stem cells by enhancing the interaction between NEMO and 'Lys-63'-ubiquitinated RIPK1/RIP1, eventually leading to enhanced production of VEGFA and others angiogenic factors. Essential for VEGF signaling through the activation of phospholipase C-gamma and ERK1/2, hence may control endothelial cell proliferation and angiogenesis. The protein is ARF GTPase-activating protein GIT1 of Rattus norvegicus (Rat).